The primary structure comprises 1456 residues: ABC-type transporter eriD (1456 aa).

Positions 1–65 (MAENEKVTYG…DPRMDPLSGK (65 aa)) are disordered. Positions 30–40 (SMTNASRSSVY) are enriched in polar residues. One can recognise an ABC transporter 1 domain in the interval 118–372 (LDIPGLARDI…FIDMGFECPP (255 aa)). The next 6 helical transmembrane spans lie at 481–501 (NFLT…SIFY), 515–535 (ALLF…ILQI), 561–581 (VLCD…VLYF), 590–610 (GAFF…SMIF), 623–643 (AMAP…FTIP), and 734–754 (ILFG…EFIA). Positions 775-799 (EGASEDEEAGTGSTGTRTQEEPVDK) are disordered. The 244-residue stretch at 813-1056 (FHWEDVIYDI…IIDYFEGQGA (244 aa)) folds into the ABC transporter 2 domain. 849–856 (GASGAGKT) lines the ATP pocket. 7 consecutive transmembrane segments (helical) span residues 1148-1168 (YIYS…FSFF), 1184-1204 (VFMG…HFVT), 1233-1253 (LPWN…PVGM), 1269-1289 (LMFL…HMLI), 1301-1321 (IASL…GPSG), 1337-1357 (PFTY…PAFC), and 1423-1443 (FGFL…FYWL).

The protein belongs to the ABC transporter superfamily. ABCG family. PDR (TC 3.A.1.205) subfamily.

The protein localises to the membrane. Its function is as follows. ABC-type transporter; part of the gene cluster that mediates the biosynthesis of erinacines, cyathane-xylosides that show unique biological activities, including leishmanicidal activity, stimulating activity for nerve growth-factor synthesis, and agonistic activity toward the kappa opioid receptor. This Hericium erinaceus (Lion's mane mushroom) protein is ABC-type transporter eriD.